A 144-amino-acid chain; its full sequence is Cytochrome c oxidase subunit 4 isoform 1, mitochondrial (144 aa).

At 1–73 (SVVKSEDYTL…SFAEMNRGSN (73 aa)) the chain is on the mitochondrial matrix side. N6-acetyllysine; alternate is present on lysine 4. Lysine 4 bears the N6-succinyllysine; alternate mark. Residues serine 31 and serine 33 each carry the phosphoserine modification. An N6-acetyllysine; alternate modification is found at lysine 35. Lysine 35 is subject to N6-succinyllysine; alternate. N6-acetyllysine is present on lysine 42. Residues 74-99 (EWKTVVGAAMFFIGFTAILIMLEKRY) form a helical membrane-spanning segment. At 100 to 144 (VYGPLPHTFDKEWVAMQTKRMLDLKVNPVDGLASKWDYEKKEWKK) the chain is on the mitochondrial intermembrane side.

Belongs to the cytochrome c oxidase IV family. As to quaternary structure, component of the cytochrome c oxidase (complex IV, CIV), a multisubunit enzyme composed of 14 subunits. The complex is composed of a catalytic core of 3 subunits MT-CO1, MT-CO2 and MT-CO3, encoded in the mitochondrial DNA, and 11 supernumerary subunits COX4I, COX5A, COX5B, COX6A, COX6B, COX6C, COX7A, COX7B, COX7C, COX8 and NDUFA4, which are encoded in the nuclear genome. The complex exists as a monomer or a dimer and forms supercomplexes (SCs) in the inner mitochondrial membrane with NADH-ubiquinone oxidoreductase (complex I, CI) and ubiquinol-cytochrome c oxidoreductase (cytochrome b-c1 complex, complex III, CIII), resulting in different assemblies (supercomplex SCI(1)III(2)IV(1) and megacomplex MCI(2)III(2)IV(2)). Interacts with PHB2; the interaction decreases in absence of SPHK2. Interacts with AFG1L. Interacts with ABCB7; this interaction allows the regulation of cellular iron homeostasis and cellular reactive oxygen species (ROS) levels in cardiomyocytes. Interacts with FLVCR2; this interaction occurs in the absence of heme and is disrupted upon heme binding. Interacts with IRGC.

The protein resides in the mitochondrion inner membrane. Its pathway is energy metabolism; oxidative phosphorylation. In terms of biological role, component of the cytochrome c oxidase, the last enzyme in the mitochondrial electron transport chain which drives oxidative phosphorylation. The respiratory chain contains 3 multisubunit complexes succinate dehydrogenase (complex II, CII), ubiquinol-cytochrome c oxidoreductase (cytochrome b-c1 complex, complex III, CIII) and cytochrome c oxidase (complex IV, CIV), that cooperate to transfer electrons derived from NADH and succinate to molecular oxygen, creating an electrochemical gradient over the inner membrane that drives transmembrane transport and the ATP synthase. Cytochrome c oxidase is the component of the respiratory chain that catalyzes the reduction of oxygen to water. Electrons originating from reduced cytochrome c in the intermembrane space (IMS) are transferred via the dinuclear copper A center (CU(A)) of subunit 2 and heme A of subunit 1 to the active site in subunit 1, a binuclear center (BNC) formed by heme A3 and copper B (CU(B)). The BNC reduces molecular oxygen to 2 water molecules using 4 electrons from cytochrome c in the IMS and 4 protons from the mitochondrial matrix. This chain is Cytochrome c oxidase subunit 4 isoform 1, mitochondrial (COX4I1), found in Pithecia pithecia (White-faced saki).